Reading from the N-terminus, the 563-residue chain is Arginine--tRNA ligase (563 aa).

The 'HIGH' region signature appears at 119-129 (ANPTGPLHVGR).

It belongs to the class-I aminoacyl-tRNA synthetase family.

The protein resides in the cytoplasm. The catalysed reaction is tRNA(Arg) + L-arginine + ATP = L-arginyl-tRNA(Arg) + AMP + diphosphate. In Methanocella arvoryzae (strain DSM 22066 / NBRC 105507 / MRE50), this protein is Arginine--tRNA ligase.